Consider the following 804-residue polypeptide: DNA mismatch repair protein MutS (804 aa).

ATP is bound at residue 614 to 621 (GPNMAGKS).

The protein belongs to the DNA mismatch repair MutS family.

Its function is as follows. This protein is involved in the repair of mismatches in DNA. It is possible that it carries out the mismatch recognition step. This protein has a weak ATPase activity. The protein is DNA mismatch repair protein MutS of Ehrlichia ruminantium (strain Welgevonden).